Here is a 272-residue protein sequence, read N- to C-terminus: Elongation factor Ts (272 aa).

Residues 76–79 are involved in Mg(2+) ion dislocation from EF-Tu; that stretch reads TDFV.

This sequence belongs to the EF-Ts family.

Its subcellular location is the cytoplasm. Its function is as follows. Associates with the EF-Tu.GDP complex and induces the exchange of GDP to GTP. It remains bound to the aminoacyl-tRNA.EF-Tu.GTP complex up to the GTP hydrolysis stage on the ribosome. This chain is Elongation factor Ts, found in Corynebacterium jeikeium (strain K411).